A 645-amino-acid polypeptide reads, in one-letter code: 1,4-alpha-glucan branching enzyme GlgB (645 aa).

D309 (nucleophile) is an active-site residue. Catalysis depends on E352, which acts as the Proton donor. A disordered region spans residues 619–645 (VKTRKGSKKQDGSKTKVRSNVTSRGKR). Polar residues predominate over residues 636–645 (RSNVTSRGKR).

The protein belongs to the glycosyl hydrolase 13 family. GlgB subfamily. Monomer.

The enzyme catalyses Transfers a segment of a (1-&gt;4)-alpha-D-glucan chain to a primary hydroxy group in a similar glucan chain.. It functions in the pathway glycan biosynthesis; glycogen biosynthesis. Catalyzes the formation of the alpha-1,6-glucosidic linkages in glycogen by scission of a 1,4-alpha-linked oligosaccharide from growing alpha-1,4-glucan chains and the subsequent attachment of the oligosaccharide to the alpha-1,6 position. The polypeptide is 1,4-alpha-glucan branching enzyme GlgB (Bacillus cereus (strain ATCC 14579 / DSM 31 / CCUG 7414 / JCM 2152 / NBRC 15305 / NCIMB 9373 / NCTC 2599 / NRRL B-3711)).